A 425-amino-acid chain; its full sequence is Serine--tRNA ligase (425 aa).

2 disordered regions span residues 43–69 and 108–134; these read QRSSLQAEGNRIGKEVGQRIQQGSDPK and LPNLPSPDCPEGRDENDNQERHRWGKP. The segment covering 117–134 has biased composition (basic and acidic residues); sequence PEGRDENDNQERHRWGKP. 233 to 235 contacts L-serine; it reads TAE. An ATP-binding site is contributed by 264–266; it reads RRE. Glu287 is an L-serine binding site. ATP is bound at residue 351 to 354; sequence EISS. Position 385 (Ser385) interacts with L-serine.

Belongs to the class-II aminoacyl-tRNA synthetase family. Type-1 seryl-tRNA synthetase subfamily. Homodimer. The tRNA molecule binds across the dimer.

The protein localises to the cytoplasm. It carries out the reaction tRNA(Ser) + L-serine + ATP = L-seryl-tRNA(Ser) + AMP + diphosphate + H(+). It catalyses the reaction tRNA(Sec) + L-serine + ATP = L-seryl-tRNA(Sec) + AMP + diphosphate + H(+). The protein operates within aminoacyl-tRNA biosynthesis; selenocysteinyl-tRNA(Sec) biosynthesis; L-seryl-tRNA(Sec) from L-serine and tRNA(Sec): step 1/1. Catalyzes the attachment of serine to tRNA(Ser). Is also able to aminoacylate tRNA(Sec) with serine, to form the misacylated tRNA L-seryl-tRNA(Sec), which will be further converted into selenocysteinyl-tRNA(Sec). This chain is Serine--tRNA ligase, found in Prochlorococcus marinus (strain MIT 9313).